The following is a 94-amino-acid chain: MNIYDVIKKPLITEKTTVEKDDKNVIAFVVNGAANKIEIKAAVEKLFNAQVSAVNTVNVAGKTKRTAKGIGKRSNWKKAYVTLKEGSNVDFFEA.

The protein belongs to the universal ribosomal protein uL23 family. As to quaternary structure, part of the 50S ribosomal subunit. Contacts protein L29, and trigger factor when it is bound to the ribosome.

Functionally, one of the early assembly proteins it binds 23S rRNA. One of the proteins that surrounds the polypeptide exit tunnel on the outside of the ribosome. Forms the main docking site for trigger factor binding to the ribosome. This Geobacter sp. (strain M21) protein is Large ribosomal subunit protein uL23.